The primary structure comprises 2298 residues: Protein Ycf2 (2298 aa).

1640-1647 contributes to the ATP binding site; the sequence is GSIGTGRS.

The protein belongs to the Ycf2 family.

The protein localises to the plastid. The protein resides in the chloroplast stroma. Probable ATPase of unknown function. Its presence in a non-photosynthetic plant (Epifagus virginiana) and experiments in tobacco indicate that it has an essential function which is probably not related to photosynthesis. In Carica papaya (Papaya), this protein is Protein Ycf2.